A 430-amino-acid polypeptide reads, in one-letter code: Serine--tRNA ligase (430 aa).

236-238 (TAE) is an L-serine binding site. 267–269 (RRE) contributes to the ATP binding site. Glutamate 290 lines the L-serine pocket. Position 354–357 (354–357 (EISS)) interacts with ATP. Serine 390 contacts L-serine.

Belongs to the class-II aminoacyl-tRNA synthetase family. Type-1 seryl-tRNA synthetase subfamily. As to quaternary structure, homodimer. The tRNA molecule binds across the dimer.

It localises to the cytoplasm. It catalyses the reaction tRNA(Ser) + L-serine + ATP = L-seryl-tRNA(Ser) + AMP + diphosphate + H(+). The enzyme catalyses tRNA(Sec) + L-serine + ATP = L-seryl-tRNA(Sec) + AMP + diphosphate + H(+). It functions in the pathway aminoacyl-tRNA biosynthesis; selenocysteinyl-tRNA(Sec) biosynthesis; L-seryl-tRNA(Sec) from L-serine and tRNA(Sec): step 1/1. Functionally, catalyzes the attachment of serine to tRNA(Ser). Is also able to aminoacylate tRNA(Sec) with serine, to form the misacylated tRNA L-seryl-tRNA(Sec), which will be further converted into selenocysteinyl-tRNA(Sec). In Gloeothece citriformis (strain PCC 7424) (Cyanothece sp. (strain PCC 7424)), this protein is Serine--tRNA ligase.